We begin with the raw amino-acid sequence, 126 residues long: Nascent polypeptide-associated complex protein (126 aa).

The NAC-A/B domain occupies 10–77 (PRMMKQMQKM…AKKVAKEEEK (68 aa)).

This sequence belongs to the NAC-alpha family. As to quaternary structure, homodimer. Interacts with the ribosome. Binds ribosomal RNA.

Contacts the emerging nascent chain on the ribosome. This chain is Nascent polypeptide-associated complex protein, found in Methanococcus maripaludis (strain C7 / ATCC BAA-1331).